Reading from the N-terminus, the 436-residue chain is Voltage-gated potassium channel regulatory subunit KCNG3 (436 aa).

The Cytoplasmic portion of the chain corresponds to 1-168 (MTFGRSGAAS…RTFEEPTSSL (168 aa)). The chain crosses the membrane as a helical span at residues 169–190 (AAQILASVSVVFVIVSMVVLCA). Residues 191 to 220 (STLPDWRNAAADNRSLDDRSRYSAGPGREP) are Extracellular-facing. Residues 221–242 (SGIIEAICIGWFTAECIVRFIV) traverse the membrane as a helical segment. Topologically, residues 243 to 253 (SKNKCEFVKRP) are cytoplasmic. A helical transmembrane segment spans residues 254 to 274 (LNIIDLLAITPYYISVLMTVF). Topologically, residues 275 to 284 (TGENSQLQRA) are extracellular. The helical; Voltage-sensor transmembrane segment at 285–305 (GVTLRVLRMMRIFWVIKLARH) threads the bilayer. Over 306 to 320 (FIGLQTLGLTLKRCY) the chain is Cytoplasmic. Residues 321–342 (REMVMLLVFICVAMAIFSALSQ) form a helical membrane-spanning segment. Over 343 to 360 (LLEHGLDLETSNKDFTSI) the chain is Extracellular. Positions 361–372 (PAACWWVIISMT) form an intramembrane region, helical. The Selectivity filter motif lies at 373 to 378 (TVGYGD). Residues 373–380 (TVGYGDMY) lie within the membrane without spanning it. Topologically, residues 381 to 387 (PITVPGR) are extracellular. The helical transmembrane segment at 388–416 (ILGGVCVVSGIVLLALPITFIYHSFVQCY) threads the bilayer. The Cytoplasmic segment spans residues 417-436 (HELKFRSARYSRSLSTEFLN).

This sequence belongs to the potassium channel family. G (TC 1.A.1.2) subfamily. Kv6.3/KCNG3 sub-subfamily. As to quaternary structure, heterotetramer with KCNB1. Does not form homomultimers. In terms of tissue distribution, expressed in the brain, liver, testis, small intestine, colon, thymus and adrenal gland.

It is found in the cell membrane. The protein resides in the cytoplasm. Functionally, regulatory subunit of the voltage-gated potassium (Kv) channel which, when coassembled with KCNB1, modulates the kinetics parameters of the heterotetrameric channel namely the inactivation and deactivation rate. Potassium channel subunit that does not form functional channels by itself. Reduces the deactivation rate. Moderately accelerates activation. This is Voltage-gated potassium channel regulatory subunit KCNG3 from Homo sapiens (Human).